The chain runs to 524 residues: Phosphoenolpyruvate carboxykinase (ATP) (524 aa).

Substrate-binding residues include Arg52, Tyr188, and Lys194. Residues Lys194, His213, and 229–237 (GLSGTGKTT) contribute to the ATP site. Mn(2+)-binding residues include Lys194 and His213. Asp250 is a Mn(2+) binding site. Residues Glu278, Arg314, and Thr439 each contribute to the ATP site. Residue Arg314 coordinates substrate.

This sequence belongs to the phosphoenolpyruvate carboxykinase (ATP) family. Mn(2+) is required as a cofactor.

Its subcellular location is the cytoplasm. The enzyme catalyses oxaloacetate + ATP = phosphoenolpyruvate + ADP + CO2. It participates in carbohydrate biosynthesis; gluconeogenesis. In terms of biological role, involved in the gluconeogenesis. Catalyzes the conversion of oxaloacetate (OAA) to phosphoenolpyruvate (PEP) through direct phosphoryl transfer between the nucleoside triphosphate and OAA. In Campylobacter lari (strain RM2100 / D67 / ATCC BAA-1060), this protein is Phosphoenolpyruvate carboxykinase (ATP).